The chain runs to 315 residues: Cytochrome c biogenesis protein CcsA (315 aa).

The next 8 helical transmembrane spans lie at 15 to 35 (SCFL…GFGG), 39 to 59 (FSFT…LQLI), 73 to 93 (LYES…YIEV), 97 to 117 (TLFL…FTDF), 144 to 164 (VMIA…AYLV), 222 to 242 (TIGI…IWAN), 257 to 277 (WAFI…VGGW), and 283 to 303 (ALVA…VNLL).

It belongs to the CcmF/CycK/Ccl1/NrfE/CcsA family. As to quaternary structure, may interact with Ccs1.

Its subcellular location is the plastid. It is found in the chloroplast thylakoid membrane. Its function is as follows. Required during biogenesis of c-type cytochromes (cytochrome c6 and cytochrome f) at the step of heme attachment. The chain is Cytochrome c biogenesis protein CcsA from Chlorella vulgaris (Green alga).